The chain runs to 261 residues: Ribosome-inactivating protein PD-L3/PD-L4 (261 aa).

Residue asparagine 10 is glycosylated (N-linked (GlcNAc...) asparagine; in PD-L3). Cystine bridges form between cysteine 34-cysteine 258 and cysteine 84-cysteine 105. Glutamate 175 is a catalytic residue.

The protein belongs to the ribosome-inactivating protein family. Type 1 RIP subfamily.

The catalysed reaction is Endohydrolysis of the N-glycosidic bond at one specific adenosine on the 28S rRNA.. Functionally, inhibits protein synthesis. Does not cleave supercoiled pBR322 dsDNA. This chain is Ribosome-inactivating protein PD-L3/PD-L4, found in Phytolacca dioica (Bella sombra tree).